A 286-amino-acid chain; its full sequence is MKKMSRRQFLKGMFGALAAGALTAGGGYGYARYLEPHMIETTEHTIKSSLIPHGFDGFKIVQFSDAHLSDYFTLEDLKTVILTINESKPDLIVFTGDIIDNPDTYQHHQAVIPLLRKLNAPFGKLCIYGNHDHGGYGTAVYKSLMTAGGFTVYRNGYQTLSLADGSKIEIASLDDLMLGNPDYEGTLSRLSDRLFSILLVHEPDAALKTTDYPVNLQLSGHTHGGQIQLPFYGPIITPPYGKVYTEGMYQTGSTHIYVNRGLGMTRLPLRFLAKPEITVFTLKSTN.

Positions methionine 1 to alanine 31 form a signal peptide, tat-type signal. Residues aspartate 65, histidine 67, aspartate 97, asparagine 130, histidine 221, and histidine 223 each coordinate a divalent metal cation.

It belongs to the metallophosphoesterase superfamily. It depends on a divalent metal cation as a cofactor. Predicted to be exported by the Tat system. The position of the signal peptide cleavage has not been experimentally proven.

This is an uncharacterized protein from Bacillus subtilis (strain 168).